The chain runs to 282 residues: Ribosomal RNA small subunit methyltransferase A (282 aa).

S-adenosyl-L-methionine contacts are provided by Asn28, Leu30, Gly55, Glu77, Asp103, and Asn123.

This sequence belongs to the class I-like SAM-binding methyltransferase superfamily. rRNA adenine N(6)-methyltransferase family. RsmA subfamily.

Its subcellular location is the cytoplasm. The enzyme catalyses adenosine(1518)/adenosine(1519) in 16S rRNA + 4 S-adenosyl-L-methionine = N(6)-dimethyladenosine(1518)/N(6)-dimethyladenosine(1519) in 16S rRNA + 4 S-adenosyl-L-homocysteine + 4 H(+). In terms of biological role, specifically dimethylates two adjacent adenosines (A1518 and A1519) in the loop of a conserved hairpin near the 3'-end of 16S rRNA in the 30S particle. May play a critical role in biogenesis of 30S subunits. The sequence is that of Ribosomal RNA small subunit methyltransferase A from Afipia carboxidovorans (strain ATCC 49405 / DSM 1227 / KCTC 32145 / OM5) (Oligotropha carboxidovorans).